A 181-amino-acid polypeptide reads, in one-letter code: Inner membrane-spanning protein YciB (181 aa).

The next 5 membrane-spanning stretches (helical) occupy residues 22–42, 50–70, 72–92, 118–138, and 148–168; these read IYTA…ILYF, MHLV…AFHD, AFIK…LAVS, VTWY…YVAF, and FKVF…VFYI.

This sequence belongs to the YciB family.

It localises to the cell inner membrane. Plays a role in cell envelope biogenesis, maintenance of cell envelope integrity and membrane homeostasis. This is Inner membrane-spanning protein YciB from Shewanella denitrificans (strain OS217 / ATCC BAA-1090 / DSM 15013).